We begin with the raw amino-acid sequence, 69 residues long: Cytochrome c oxidase subunit 8A, mitochondrial (69 aa).

Residues 1–25 (MSVLTSLLLRGLTGSARRLPVPRAK) constitute a mitochondrion transit peptide. At 26–36 (VHSMPPEEELG) the chain is on the mitochondrial matrix side. A helical transmembrane segment spans residues 37–60 (IMEKAIGLTFCFVSLFLPAGWILS). Over 61 to 69 (HLEDYKRPE) the chain is Mitochondrial intermembrane.

It belongs to the cytochrome c oxidase VIII family. As to quaternary structure, component of the cytochrome c oxidase (complex IV, CIV), a multisubunit enzyme composed of 14 subunits. The complex is composed of a catalytic core of 3 subunits MT-CO1, MT-CO2 and MT-CO3, encoded in the mitochondrial DNA, and 11 supernumerary subunits COX4I, COX5A, COX5B, COX6A, COX6B, COX6C, COX7A, COX7B, COX7C, COX8 and NDUFA4, which are encoded in the nuclear genome. The complex exists as a monomer or a dimer and forms supercomplexes (SCs) in the inner mitochondrial membrane with NADH-ubiquinone oxidoreductase (complex I, CI) and ubiquinol-cytochrome c oxidoreductase (cytochrome b-c1 complex, complex III, CIII), resulting in different assemblies (supercomplex SCI(1)III(2)IV(1) and megacomplex MCI(2)III(2)IV(2)). In terms of processing, in response to mitochondrial stress, the precursor protein is ubiquitinated by the SIFI complex in the cytoplasm before mitochondrial import, leading to its degradation. Within the SIFI complex, UBR4 initiates ubiquitin chain that are further elongated or branched by KCMF1.

Its subcellular location is the mitochondrion inner membrane. It participates in energy metabolism; oxidative phosphorylation. Its function is as follows. Component of the cytochrome c oxidase, the last enzyme in the mitochondrial electron transport chain which drives oxidative phosphorylation. The respiratory chain contains 3 multisubunit complexes succinate dehydrogenase (complex II, CII), ubiquinol-cytochrome c oxidoreductase (cytochrome b-c1 complex, complex III, CIII) and cytochrome c oxidase (complex IV, CIV), that cooperate to transfer electrons derived from NADH and succinate to molecular oxygen, creating an electrochemical gradient over the inner membrane that drives transmembrane transport and the ATP synthase. Cytochrome c oxidase is the component of the respiratory chain that catalyzes the reduction of oxygen to water. Electrons originating from reduced cytochrome c in the intermembrane space (IMS) are transferred via the dinuclear copper A center (CU(A)) of subunit 2 and heme A of subunit 1 to the active site in subunit 1, a binuclear center (BNC) formed by heme A3 and copper B (CU(B)). The BNC reduces molecular oxygen to 2 water molecules using 4 electrons from cytochrome c in the IMS and 4 protons from the mitochondrial matrix. The polypeptide is Cytochrome c oxidase subunit 8A, mitochondrial (COX8A) (Macaca fascicularis (Crab-eating macaque)).